The sequence spans 506 residues: 2,3-bisphosphoglycerate-independent phosphoglycerate mutase (506 aa).

Positions 13 and 63 each coordinate Mn(2+). The Phosphoserine intermediate role is filled by Ser63. Residues His124, 153–154, Arg183, Arg189, 254–257, and Lys330 contribute to the substrate site; these read RD and RADR. Mn(2+) contacts are provided by Asp396, His400, Asp437, His438, and His456.

This sequence belongs to the BPG-independent phosphoglycerate mutase family. In terms of assembly, monomer. Requires Mn(2+) as cofactor.

The enzyme catalyses (2R)-2-phosphoglycerate = (2R)-3-phosphoglycerate. It functions in the pathway carbohydrate degradation; glycolysis; pyruvate from D-glyceraldehyde 3-phosphate: step 3/5. Catalyzes the interconversion of 2-phosphoglycerate and 3-phosphoglycerate. In Cereibacter sphaeroides (strain ATCC 17023 / DSM 158 / JCM 6121 / CCUG 31486 / LMG 2827 / NBRC 12203 / NCIMB 8253 / ATH 2.4.1.) (Rhodobacter sphaeroides), this protein is 2,3-bisphosphoglycerate-independent phosphoglycerate mutase.